A 148-amino-acid chain; its full sequence is SsrA-binding protein (148 aa).

Basic and acidic residues predominate over residues 129–142; the sequence is ETEKKRDWEREKAR. The interval 129–148 is disordered; the sequence is ETEKKRDWEREKARIMRAGT.

The protein belongs to the SmpB family.

The protein resides in the cytoplasm. Its function is as follows. Required for rescue of stalled ribosomes mediated by trans-translation. Binds to transfer-messenger RNA (tmRNA), required for stable association of tmRNA with ribosomes. tmRNA and SmpB together mimic tRNA shape, replacing the anticodon stem-loop with SmpB. tmRNA is encoded by the ssrA gene; the 2 termini fold to resemble tRNA(Ala) and it encodes a 'tag peptide', a short internal open reading frame. During trans-translation Ala-aminoacylated tmRNA acts like a tRNA, entering the A-site of stalled ribosomes, displacing the stalled mRNA. The ribosome then switches to translate the ORF on the tmRNA; the nascent peptide is terminated with the 'tag peptide' encoded by the tmRNA and targeted for degradation. The ribosome is freed to recommence translation, which seems to be the essential function of trans-translation. This Burkholderia orbicola (strain AU 1054) protein is SsrA-binding protein.